A 162-amino-acid chain; its full sequence is NADH-quinone oxidoreductase subunit I (162 aa).

4Fe-4S ferredoxin-type domains lie at 53 to 83 and 93 to 122; these read LRRY…IESE and TRYD…ETRV. The [4Fe-4S] cluster site is built by Cys-63, Cys-66, Cys-69, Cys-73, Cys-102, Cys-105, Cys-108, and Cys-112.

Belongs to the complex I 23 kDa subunit family. In terms of assembly, NDH-1 is composed of 14 different subunits. Subunits NuoA, H, J, K, L, M, N constitute the membrane sector of the complex. Requires [4Fe-4S] cluster as cofactor.

It is found in the cell inner membrane. The enzyme catalyses a quinone + NADH + 5 H(+)(in) = a quinol + NAD(+) + 4 H(+)(out). Its function is as follows. NDH-1 shuttles electrons from NADH, via FMN and iron-sulfur (Fe-S) centers, to quinones in the respiratory chain. The immediate electron acceptor for the enzyme in this species is believed to be ubiquinone. Couples the redox reaction to proton translocation (for every two electrons transferred, four hydrogen ions are translocated across the cytoplasmic membrane), and thus conserves the redox energy in a proton gradient. This chain is NADH-quinone oxidoreductase subunit I, found in Nitrosomonas eutropha (strain DSM 101675 / C91 / Nm57).